We begin with the raw amino-acid sequence, 90 residues long: UPF0237 protein BL1209.1 (90 aa).

The 75-residue stretch at 5-79 (IITVVGQDTV…DDIGVRIRCQ (75 aa)) folds into the ACT domain.

The protein belongs to the UPF0237 family.

The protein is UPF0237 protein BL1209.1 of Bifidobacterium longum (strain NCC 2705).